The following is a 472-amino-acid chain: Transcriptional activator protein rec16 (472 aa).

A C2H2-type zinc finger spans residues 420–444; that stretch reads FICCYCTKPFLSISKLQEHESSCSH.

It is found in the nucleus. Transcriptional activator that controls the onset of premeiotic DNA synthesis by regulating res2 and some other factor(s) in a mei2 independent cascade. This Schizosaccharomyces pombe (strain 972 / ATCC 24843) (Fission yeast) protein is Transcriptional activator protein rec16 (rec16).